The chain runs to 193 residues: ATP-dependent Clp protease proteolytic subunit (193 aa).

Ser98 (nucleophile) is an active-site residue. The active site involves His123.

This sequence belongs to the peptidase S14 family. Fourteen ClpP subunits assemble into 2 heptameric rings which stack back to back to give a disk-like structure with a central cavity, resembling the structure of eukaryotic proteasomes.

Its subcellular location is the cytoplasm. It carries out the reaction Hydrolysis of proteins to small peptides in the presence of ATP and magnesium. alpha-casein is the usual test substrate. In the absence of ATP, only oligopeptides shorter than five residues are hydrolyzed (such as succinyl-Leu-Tyr-|-NHMec, and Leu-Tyr-Leu-|-Tyr-Trp, in which cleavage of the -Tyr-|-Leu- and -Tyr-|-Trp bonds also occurs).. Cleaves peptides in various proteins in a process that requires ATP hydrolysis. Has a chymotrypsin-like activity. Plays a major role in the degradation of misfolded proteins. This chain is ATP-dependent Clp protease proteolytic subunit, found in Haemophilus influenzae (strain PittEE).